A 1251-amino-acid polypeptide reads, in one-letter code: Cyclic nucleotide-gated channel beta-1 (1251 aa).

Disordered stretches follow at residues 1 to 75, 121 to 151, 172 to 252, and 314 to 561; these read MLGW…QETK, ITED…EAQD, QPPK…TRDP, and EDAH…STNS. Residues 1–656 lie on the Cytoplasmic side of the membrane; that stretch reads MLGWVQRVLP…SIDPLTNLMY (656 aa). The segment covering 23–50 has biased composition (acidic residues); that stretch reads EEEEVEPEPEMEAEVEPEPNPEEAETES. Positions 238–247 are enriched in polar residues; it reads GSQAQTSSLP. Over residues 335–352 the composition is skewed to basic and acidic residues; it reads EENKAVEKMPRELSRIEE. The segment covering 353 to 373 has biased composition (acidic residues); it reads EKEDEEEEEEEEEEEEEEEVT. The segment covering 404–423 has biased composition (basic and acidic residues); sequence KLWEEVGEEAKKEAEEKAKE. Acidic residues predominate over residues 424–434; sequence EAEEVAEEEAE. Residues 435-446 show a composition bias toward basic and acidic residues; the sequence is KEPQDWAETKEE. Positions 557-567 are calmodulin-binding CaM1; the sequence is ASTNSAIINDR. The IQ-like signature appears at 568-578; that stretch reads LQELVKLFKER. The disordered stretch occupies residues 585–619; the sequence is KLIDPDVTSDEESPKPSPAKKAPEPAPDTKPAEAE. Residues 657 to 678 traverse the membrane as a helical segment; it reads VLWLFFVVMAWNWNCWLIPVRW. Over 679–687 the chain is Extracellular; the sequence is AFPYQTPDN. A helical membrane pass occupies residues 688 to 709; it reads IHHWLLMDYLCDLIYFLDITVF. Residues 710–724 lie on the Cytoplasmic side of the membrane; that stretch reads QTRLQFVRGGDIITD. Residues 725–744 form a helical membrane-spanning segment; it reads KKDMRNNYLKSRRFKMDLLS. Residues 745–760 lie on the Extracellular side of the membrane; it reads LLPLDFLYLKVGVNPL. A helical transmembrane segment spans residues 761 to 773; it reads LRLPRCLKYMAFF. Topologically, residues 774 to 785 are cytoplasmic; the sequence is EFNSRLESILSK. Residues 786 to 808 traverse the membrane as a helical segment; sequence AYVYRVIRTTAYLLYSLHLNSCL. The interval 786 to 885 is ion conduction pathway; that stretch reads AYVYRVIRTT…IGQMRDVVGA (100 aa). The Extracellular segment spans residues 809 to 831; the sequence is YYWASAYQGLGSTHWVYDGVGNS. Transmembrane regions (helical) follow at residues 832 to 858 and 859 to 884; these read YIRC…LFEI and VFQL…DVVG. The Cytoplasmic segment spans residues 885-1251; it reads AATAGQTYYR…MPEEREEKAE (367 aa). The interval 888 to 964 is C-linker; it reads AGQTYYRSCM…NIVSKVALFQ (77 aa). Residues 968-1084 are cyclic nucleotide-binding domain; it reads RQMIFDMLKR…LLRKKARRML (117 aa). 5 residues coordinate 3',5'-cyclic GMP: Gly1029, Glu1030, Ser1032, Arg1042, and Thr1043. Position 1042 (Arg1042) interacts with 3',5'-cyclic AMP. The segment at 1148–1154 is calmodulin-binding CaM2; it reads QQELVEQ. The tract at residues 1151–1251 is disordered; it reads LVEQAKSSQD…MPEEREEKAE (101 aa). The segment covering 1183-1203 has biased composition (pro residues); that stretch reads PPAPRTPPEPPGSPPSSPPPA. Positions 1242-1251 are enriched in basic and acidic residues; it reads MPEEREEKAE.

It belongs to the cyclic nucleotide-gated cation channel (TC 1.A.1.5) family. CNGB1 subfamily. The rod cyclic nucleotide-gated channel is a heterotetramer composed of CNGA1 and CNGB1 subunits with 3:1 stoichiometry. CNGA1:CNGB1 channel binds Ca(2+)-bound CALM1 via CaM1 and CaM2 regions of the CNGB1 subunit; this interaction modulates the affinity of the channel for cNMPs in response to intracellular Ca(2+) levels. The olfactory cyclic nucleotide-gated channel is a heterotetramer composed of CNGA2, CNGA4 and CNGB1 subunits with 2:1:1 stoichiometry.

Its subcellular location is the cell membrane. The protein resides in the cell projection. The protein localises to the cilium membrane. It carries out the reaction Ca(2+)(in) = Ca(2+)(out). The enzyme catalyses Na(+)(in) = Na(+)(out). It catalyses the reaction K(+)(in) = K(+)(out). The catalysed reaction is NH4(+)(in) = NH4(+)(out). It carries out the reaction Rb(+)(in) = Rb(+)(out). The enzyme catalyses Li(+)(in) = Li(+)(out). It catalyses the reaction Cs(+)(in) = Cs(+)(out). Its function is as follows. Pore-forming subunit of the rod cyclic nucleotide-gated channel. Mediates rod photoresponses at dim light converting transient changes in intracellular cGMP levels into electrical signals. In the dark, cGMP levels are high and keep the channel open enabling a steady inward current carried by Na(+) and Ca(2+) ions that leads to membrane depolarization and neurotransmitter release from synaptic terminals. Upon photon absorption cGMP levels decline leading to channel closure and membrane hyperpolarization that ultimately slows neurotransmitter release and signals the presence of light, the end point of the phototransduction cascade. Pore-forming subunit of the olfactory cyclic nucleotide-gated channel. Operates in the cilia of olfactory sensory neurons where chemical stimulation of the odorant is converted to an electrical signal. Mediates odorant-induced cAMP-dependent Ca(2+) influx triggering neuron depolarization. The rise of intracellular Ca(2+) levels potentiates the olfactory response by activating Ca(2+)-dependent Cl(-) channels, but it also serves as a negative feedback signal to desensitize the channel for rapid adaptation to odorants. Conducts cGMP- and cAMP-gated ion currents, with permeability for monovalent and divalent cations. The selectivity for Ca(2+) over Na(+) increases with cGMP concentrations, whereas the selectivity among monovalent ions is independent of the cGMP levels. Functionally, high affinity rod photoreceptor phosphodiesterase (PDE6)-binding protein that modulates its catalytic properties: it is a regulator of spontaneous activation of rod PDE6, thereby serving to lower rod photoreceptor 'dark noise' and allowing these sensory cells to operate at the single photon detection limit. The sequence is that of Cyclic nucleotide-gated channel beta-1 from Homo sapiens (Human).